The following is a 125-amino-acid chain: Holo-[acyl-carrier-protein] synthase (125 aa).

Mg(2+) contacts are provided by aspartate 8 and glutamate 55.

The protein belongs to the P-Pant transferase superfamily. AcpS family. Mg(2+) is required as a cofactor.

It localises to the cytoplasm. It carries out the reaction apo-[ACP] + CoA = holo-[ACP] + adenosine 3',5'-bisphosphate + H(+). In terms of biological role, transfers the 4'-phosphopantetheine moiety from coenzyme A to a Ser of acyl-carrier-protein. The polypeptide is Holo-[acyl-carrier-protein] synthase (Treponema pallidum (strain Nichols)).